Consider the following 974-residue polypeptide: Probable proton ATPase 1A (974 aa).

The segment covering 1 to 23 (MSSKKYELDAAAFEDKPESHSDA) has biased composition (basic and acidic residues). Residues 1 to 61 (MSSKKYELDA…ATDLLPPSKG (61 aa)) form a disordered region. The Cytoplasmic portion of the chain corresponds to 1–92 (MSSKKYELDA…KTPSWLIYVR (92 aa)). The chain crosses the membrane as a helical span at residues 93 to 112 (GLWGPMPAALWIAIIIEFAL). Topologically, residues 113–117 (ENWPD) are extracellular. A helical transmembrane segment spans residues 118–137 (GAILFAIQIANATIGWYETI). Residues 138-264 (KAGDAVAALK…LGNIHVILRR (127 aa)) lie on the Cytoplasmic side of the membrane. A helical transmembrane segment spans residues 265–286 (VMFSLCAISFMLCMCCFIYLLA). Over 287–294 (RFYETFRH) the chain is Extracellular. A helical transmembrane segment spans residues 295 to 321 (ALQFAVVVLVVSIPIALEIVVTTTLAV). Residues 322–630 (GSKHLSKHKI…AVHGATDAAR (309 aa)) lie on the Cytoplasmic side of the membrane. The 4-aspartylphosphate intermediate role is filled by Asp351. Residues Asp605 and Asp609 each coordinate Mg(2+). Residues 631–651 (AAADMVLTEPGLSVVVEAMLV) traverse the membrane as a helical segment. Over 652–661 (SREVFQRMLS) the chain is Extracellular. The chain crosses the membrane as a helical span at residues 662-684 (FLTYRISATLQLVCFFFIACFSL). At 685 to 697 (TPKAYGSVDPHFQ) the chain is on the cytoplasmic side. Residues 698-712 (FFHLPVLMFMLITLL) form a helical membrane-spanning segment. Over 713-737 (NDGCLMTIGYDHVIPSERPQKWNLP) the chain is Extracellular. Residue Asp714 coordinates Mg(2+). Residues 738–761 (VVFVSASILAAVACGSSLMLLWIG) traverse the membrane as a helical segment. At 762–812 (LEGYSSQYYENSWFHRLGLAQLPQGKLVTMMYLKISISDFLTLFSSRTGGH) the chain is on the cytoplasmic side. The helical transmembrane segment at 813–840 (FFFYMPPSPILFCGAIISLLVSTMAASF) threads the bilayer. Residues 841 to 868 (WHKSRPDNVLTEGLAWGQTNAEKLLPLW) are Extracellular-facing. Residues 869 to 887 (VWIYCIVWWFVQDVVKVLA) traverse the membrane as a helical segment. Residues 888-974 (HICMDAVDLF…VNVYVSRDQK (87 aa)) lie on the Cytoplasmic side of the membrane. The span at 950–959 (GLREDTHSPI) shows a compositional bias: basic and acidic residues. The segment at 950 to 974 (GLREDTHSPIEEASPVNVYVSRDQK) is disordered.

Belongs to the cation transport ATPase (P-type) (TC 3.A.3) family. Type IIIA subfamily.

The protein localises to the membrane. The catalysed reaction is ATP + H2O + H(+)(in) = ADP + phosphate + 2 H(+)(out). The sequence is that of Probable proton ATPase 1A (H1A) from Leishmania donovani.